Here is a 286-residue protein sequence, read N- to C-terminus: Probable alpha-ketoglutarate-dependent hypophosphite dioxygenase (286 aa).

Belongs to the PhyH family.

In terms of biological role, required for hypophosphite oxidation. The polypeptide is Probable alpha-ketoglutarate-dependent hypophosphite dioxygenase (htxA) (Stutzerimonas stutzeri (Pseudomonas stutzeri)).